Consider the following 581-residue polypeptide: Kelch-like protein 38 (581 aa).

The 68-residue stretch at 34–101 (TDVSICAGAR…VYTGEAHIAT (68 aa)) folds into the BTB domain. The region spanning 136-237 (CLGMIRLSEI…HPAFFHHFIA (102 aa)) is the BACK domain. Kelch repeat units follow at residues 285 to 332 (FLIL…TLHR), 334 to 383 (IYVL…AHKN), 384 to 431 (FIFS…VKDQ), 433 to 479 (LYLF…VLGE), 480 to 521 (RIVI…VMGN), and 523 to 573 (LYVT…TLQC).

The chain is Kelch-like protein 38 (KLHL38) from Homo sapiens (Human).